The chain runs to 604 residues: Glutamine--fructose-6-phosphate aminotransferase [isomerizing] (604 aa).

The Nucleophile; for GATase activity role is filled by Cys-2. Positions 2-216 (CGIVGYVGFR…DGDVVRLTRE (215 aa)) constitute a Glutamine amidotransferase type-2 domain. 2 consecutive SIS domains span residues 281–420 (LALD…ARGA) and 453–594 (VAEK…VDQP). Residue Lys-599 is the For Fru-6P isomerization activity of the active site.

In terms of assembly, homodimer.

Its subcellular location is the cytoplasm. It catalyses the reaction D-fructose 6-phosphate + L-glutamine = D-glucosamine 6-phosphate + L-glutamate. Catalyzes the first step in hexosamine metabolism, converting fructose-6P into glucosamine-6P using glutamine as a nitrogen source. The protein is Glutamine--fructose-6-phosphate aminotransferase [isomerizing] of Thermus thermophilus (strain ATCC BAA-163 / DSM 7039 / HB27).